The primary structure comprises 120 residues: Large ribosomal subunit protein uL18 (120 aa).

This sequence belongs to the universal ribosomal protein uL18 family. In terms of assembly, part of the 50S ribosomal subunit; part of the 5S rRNA/L5/L18/L25 subcomplex. Contacts the 5S and 23S rRNAs.

Its function is as follows. This is one of the proteins that bind and probably mediate the attachment of the 5S RNA into the large ribosomal subunit, where it forms part of the central protuberance. This chain is Large ribosomal subunit protein uL18, found in Methylorubrum populi (strain ATCC BAA-705 / NCIMB 13946 / BJ001) (Methylobacterium populi).